The chain runs to 323 residues: L-lactate dehydrogenase (323 aa).

Positions 11, 32, and 63 each coordinate NAD(+). Residues Gln-80 and Arg-86 each contribute to the substrate site. NAD(+) is bound by residues Ser-99, 116-118 (VSN), and Ser-141. Residue 118–121 (NPVD) participates in substrate binding. 146–149 (DTAR) is a substrate binding site. Positions 151 and 166 each coordinate beta-D-fructose 1,6-bisphosphate. His-173 (proton acceptor) is an active-site residue. Phosphotyrosine is present on Tyr-221. Thr-230 serves as a coordination point for substrate.

It belongs to the LDH/MDH superfamily. LDH family. As to quaternary structure, homotetramer.

It localises to the cytoplasm. The catalysed reaction is (S)-lactate + NAD(+) = pyruvate + NADH + H(+). The protein operates within fermentation; pyruvate fermentation to lactate; (S)-lactate from pyruvate: step 1/1. With respect to regulation, allosterically activated by fructose 1,6-bisphosphate (FBP). In terms of biological role, catalyzes the conversion of lactate to pyruvate. This chain is L-lactate dehydrogenase, found in Kosmotoga olearia (strain ATCC BAA-1733 / DSM 21960 / TBF 19.5.1).